We begin with the raw amino-acid sequence, 216 residues long: Chaperone protein TorD (216 aa).

The protein belongs to the TorD/DmsD family. TorD subfamily.

Its subcellular location is the cytoplasm. In terms of biological role, involved in the biogenesis of TorA. Acts on TorA before the insertion of the molybdenum cofactor and, as a result, probably favors a conformation of the apoenzyme that is competent for acquiring the cofactor. The chain is Chaperone protein TorD from Photobacterium profundum (strain SS9).